A 430-amino-acid polypeptide reads, in one-letter code: Enolase (430 aa).

Residue Gln164 participates in (2R)-2-phosphoglycerate binding. Residue Glu208 is the Proton donor of the active site. Asp245, Glu288, and Asp315 together coordinate Mg(2+). The (2R)-2-phosphoglycerate site is built by Lys340, Arg369, Ser370, and Lys391. Lys340 acts as the Proton acceptor in catalysis.

This sequence belongs to the enolase family. Mg(2+) is required as a cofactor.

It localises to the cytoplasm. Its subcellular location is the secreted. The protein localises to the cell surface. The enzyme catalyses (2R)-2-phosphoglycerate = phosphoenolpyruvate + H2O. Its pathway is carbohydrate degradation; glycolysis; pyruvate from D-glyceraldehyde 3-phosphate: step 4/5. In terms of biological role, catalyzes the reversible conversion of 2-phosphoglycerate (2-PG) into phosphoenolpyruvate (PEP). It is essential for the degradation of carbohydrates via glycolysis. The protein is Enolase of Thermococcus kodakarensis (strain ATCC BAA-918 / JCM 12380 / KOD1) (Pyrococcus kodakaraensis (strain KOD1)).